The chain runs to 416 residues: Phosphoglycerate kinase (416 aa).

Residues valine 23, aspartate 24, phenylalanine 25, asparagine 26, glutamine 38, arginine 39, serine 62, histidine 63, glycine 65, arginine 66, leucine 121, arginine 122, histidine 168, and arginine 169 each contribute to the (2R)-3-phosphoglycerate site. Position 212 (glycine 212) interacts with ADP. Glycine 212 contacts CDP. Positions 213 and 214 each coordinate AMP. Position 213 (alanine 213) interacts with ATP. Residue alanine 213 participates in Mg(2+) binding. Residues alanine 216 and aspartate 217 each coordinate Mg(2+). Aspartate 217 provides a ligand contact to CDP. Lysine 218 is an AMP binding site. Lysine 218 is an ATP binding site. Glycine 236 provides a ligand contact to ADP. CDP is bound at residue glycine 236. AMP-binding residues include glycine 237 and glycine 311. Positions 237 and 311 each coordinate ATP. Residues glycine 336 and phenylalanine 341 each contribute to the CDP site. Phenylalanine 341 provides a ligand contact to ADP. Glutamate 342 provides a ligand contact to AMP. Glutamate 342, aspartate 373, and threonine 374 together coordinate ATP. Aspartate 373 contacts Mg(2+).

The protein belongs to the phosphoglycerate kinase family. As to quaternary structure, monomer. Mg(2+) serves as cofactor.

The protein resides in the cytoplasm. It is found in the mitochondrion. The catalysed reaction is (2R)-3-phosphoglycerate + ATP = (2R)-3-phospho-glyceroyl phosphate + ADP. It functions in the pathway carbohydrate degradation; glycolysis; pyruvate from D-glyceraldehyde 3-phosphate: step 2/5. Its function is as follows. Catalyzes one of the two ATP producing reactions in the glycolytic pathway via the reversible conversion of 1,3-diphosphoglycerate to 3-phosphoglycerate. Both L- and D- forms of purine and pyrimidine nucleotides can be used as substrates, but the activity is much lower on pyrimidines. Negatively regulates the biosynthesis of acetyl-CoA from pyruvate in the mitochondrion. This chain is Phosphoglycerate kinase (PGK1), found in Candida glabrata (strain ATCC 2001 / BCRC 20586 / JCM 3761 / NBRC 0622 / NRRL Y-65 / CBS 138) (Yeast).